A 488-amino-acid chain; its full sequence is MSVITEQNTYLNFINGEWVKSQSGDMVKVENPADVNDIVGYVQNSTAEDVERAVTAANEAKTAWRKLTGAERGQYLYKTADIMEQRLEEIAACATREMGKTLPEAKGETARGIAILRYYAGEGMRKTGDVIPSTDKDALMFTTRVPLGVVGVISPWNFPVAIPIWKMAPALVYGNTVVIKPATETAVTCAKIIACFEEAGLPAGVINLVTGPGSVVGQGLAEHDGVNAVTFTGSNQVGKIIGQAALARGAKYQLEMGGKNPVIVADDADLEAAAEAVITGAFRSTGQKCTATSRVIVQSGIYERFKEKLLQRTKDITIGDSLKEDVWMGPIASKNQLDNCLSYIEKGKQEGASLLIGGEKLENGKYQNGYYVQPAIFDNVTSEMTIAQEEIFGPVIALIKVDSIEEALNIANDVKFGLSASIFTENIGRMLSFIDEIDAGLVRINAESAGVELQAPFGGMKQSSSHSREQGEAAKDFFTAIKTVFVKP.

NAD(+)-binding positions include K180 and 233–238; that span reads GSNQVG. Catalysis depends on E255, which acts as the Proton acceptor. The active-site Nucleophile is the C289. 2 residues coordinate NAD(+): Q336 and E390.

The protein belongs to the aldehyde dehydrogenase family. As to quaternary structure, homotetramer.

The enzyme catalyses 2,5-dioxopentanoate + NADP(+) + H2O = 2-oxoglutarate + NADPH + 2 H(+). It catalyses the reaction 2,5-dioxopentanoate + NAD(+) + H2O = 2-oxoglutarate + NADH + 2 H(+). Its function is as follows. Catalyzes the NAD(P)(+)-dependent oxidation of alpha-ketoglutaric semialdehyde (alphaKGSA) to alpha-ketoglutarate. Prefers NADP(+) to NAD(+) as a cosubstrate. In vitro, can also use various aldehydes. In Bacillus subtilis (strain 168), this protein is Alpha-ketoglutaric semialdehyde dehydrogenase.